The sequence spans 382 residues: Galactose-1-phosphate uridylyltransferase (382 aa).

Residues Cys-52 and Cys-55 each contribute to the Zn(2+) site. UDP-alpha-D-glucose-binding positions include Ala-61 and 77 to 78 (ND). His-121 is a Zn(2+) binding site. Asn-185 provides a ligand contact to UDP-alpha-D-glucose. Residue His-196 coordinates Zn(2+). Residue His-198 is the Tele-UMP-histidine intermediate of the active site. Residue Gln-200 coordinates UDP-alpha-D-glucose. The Fe cation site is built by Glu-214, His-313, His-330, and His-332. UDP-alpha-D-glucose-binding positions include 345–348 (KFLV) and 350–351 (FE).

Belongs to the galactose-1-phosphate uridylyltransferase type 1 family. Homodimer. Requires Zn(2+) as cofactor.

It carries out the reaction alpha-D-galactose 1-phosphate + UDP-alpha-D-glucose = alpha-D-glucose 1-phosphate + UDP-alpha-D-galactose. It participates in carbohydrate metabolism; galactose metabolism. Essential for growth on galactose but not for cellulase induction. The protein is Galactose-1-phosphate uridylyltransferase (gal7) of Hypocrea jecorina (Trichoderma reesei).